A 244-amino-acid polypeptide reads, in one-letter code: uncharacterized protein (244 aa).

An HTH gntR-type domain is found at Val7 to Phe74. The H-T-H motif DNA-binding region spans Arg34–Val53.

This is an uncharacterized protein from Mycobacterium tuberculosis (strain CDC 1551 / Oshkosh).